A 392-amino-acid chain; its full sequence is Tyrosine--tRNA ligase (392 aa).

A 'HIGH' region motif is present at residues 41-50; sequence PTAPDLHLGH. Residues 225 to 229 carry the 'KMSKS' region motif; that stretch reads KMSKS. Residue Lys228 participates in ATP binding. Residues 330 to 390 form the S4 RNA-binding domain; that stretch reads LRAVDFLVKI…VGKKKFYRVV (61 aa).

Belongs to the class-I aminoacyl-tRNA synthetase family. TyrS type 2 subfamily. In terms of assembly, homodimer.

It is found in the cytoplasm. The catalysed reaction is tRNA(Tyr) + L-tyrosine + ATP = L-tyrosyl-tRNA(Tyr) + AMP + diphosphate + H(+). Catalyzes the attachment of tyrosine to tRNA(Tyr) in a two-step reaction: tyrosine is first activated by ATP to form Tyr-AMP and then transferred to the acceptor end of tRNA(Tyr). The chain is Tyrosine--tRNA ligase from Aquifex aeolicus (strain VF5).